Consider the following 112-residue polypeptide: Divalent-cation tolerance protein CutA (112 aa).

Cysteine 16, histidine 83, and histidine 84 together coordinate Cu cation.

This sequence belongs to the CutA family. Homotrimer. The cofactor is Cu cation.

It is found in the cytoplasm. In terms of biological role, involved in resistance toward heavy metals. This Escherichia coli O81 (strain ED1a) protein is Divalent-cation tolerance protein CutA.